Consider the following 165-residue polypeptide: Austinoid biosynthesis cluster protein J (165 aa).

The protein belongs to the trt14 isomerase family. In terms of assembly, homodimer.

It participates in secondary metabolite biosynthesis; terpenoid biosynthesis. Part of the gene cluster that mediates the biosynthesis of calidodehydroaustin, a fungal meroterpenoid. The first step of the pathway is the synthesis of 3,5-dimethylorsellinic acid by the polyketide synthase ausA. 3,5-dimethylorsellinic acid is then prenylated by the polyprenyl transferase ausN. Further epoxidation by the FAD-dependent monooxygenase ausM and cyclization by the probable terpene cyclase ausL lead to the formation of protoaustinoid A. Protoaustinoid A is then oxidized to spiro-lactone preaustinoid A3 by the combined action of the FAD-binding monooxygenases ausB and ausC, and the dioxygenase ausE. Acid-catalyzed keto-rearrangement and ring contraction of the tetraketide portion of preaustinoid A3 by ausJ lead to the formation of preaustinoid A4. The aldo-keto reductase ausK, with the help of ausH, is involved in the next step by transforming preaustinoid A4 into isoaustinone which is in turn hydroxylated by the P450 monooxygenase ausI to form austinolide. The cytochrome P450 monooxygenase ausG modifies austinolide to austinol. Austinol is further acetylated to austin by the O-acetyltransferase ausP, which spontaneously changes to dehydroaustin. The cytochrome P450 monooxygenase ausR then converts dehydroaustin is into 7-dehydrodehydroaustin. The hydroxylation catalyzed by ausR permits the O-acetyltransferase ausQ to add an additional acetyl group to the molecule, leading to the formation of acetoxydehydroaustin. The short chain dehydrogenase ausT catalyzes the reduction of the double bond present between carbon atoms 1 and 2 to convert 7-dehydrodehydroaustin into 1,2-dihydro-7-hydroxydehydroaustin. AusQ catalyzes not only an acetylation reaction but also the addition of the PKS ausV diketide product to 1,2-dihydro-7-hydroxydehydroaustin, forming precalidodehydroaustin. Finally, the iron/alpha-ketoglutarate-dependent dioxygenase converts precalidodehydroaustin into calidodehydroaustin. The sequence is that of Austinoid biosynthesis cluster protein J from Aspergillus calidoustus.